The following is a 376-amino-acid chain: Succinyl-diaminopimelate desuccinylase (376 aa).

Position 66 (His66) interacts with Zn(2+). Residue Asp68 is part of the active site. Asp99 is a binding site for Zn(2+). The active-site Proton acceptor is Glu133. Glu134, Glu162, and His349 together coordinate Zn(2+).

This sequence belongs to the peptidase M20A family. DapE subfamily. In terms of assembly, homodimer. It depends on Zn(2+) as a cofactor. Requires Co(2+) as cofactor.

It carries out the reaction N-succinyl-(2S,6S)-2,6-diaminopimelate + H2O = (2S,6S)-2,6-diaminopimelate + succinate. It functions in the pathway amino-acid biosynthesis; L-lysine biosynthesis via DAP pathway; LL-2,6-diaminopimelate from (S)-tetrahydrodipicolinate (succinylase route): step 3/3. In terms of biological role, catalyzes the hydrolysis of N-succinyl-L,L-diaminopimelic acid (SDAP), forming succinate and LL-2,6-diaminopimelate (DAP), an intermediate involved in the bacterial biosynthesis of lysine and meso-diaminopimelic acid, an essential component of bacterial cell walls. The polypeptide is Succinyl-diaminopimelate desuccinylase (Buchnera aphidicola subsp. Cinara cedri (strain Cc)).